We begin with the raw amino-acid sequence, 336 residues long: Pyridoxal 5'-phosphate synthase subunit PdxS (336 aa).

Aspartate 30 serves as a coordination point for D-ribose 5-phosphate. Lysine 87 acts as the Schiff-base intermediate with D-ribose 5-phosphate in catalysis. Residue glycine 159 participates in D-ribose 5-phosphate binding. D-glyceraldehyde 3-phosphate is bound at residue arginine 171. Residues glycine 257 and 278–279 (GS) each bind D-ribose 5-phosphate.

This sequence belongs to the PdxS/SNZ family. As to quaternary structure, in the presence of PdxT, forms a dodecamer of heterodimers.

The catalysed reaction is aldehydo-D-ribose 5-phosphate + D-glyceraldehyde 3-phosphate + L-glutamine = pyridoxal 5'-phosphate + L-glutamate + phosphate + 3 H2O + H(+). It functions in the pathway cofactor biosynthesis; pyridoxal 5'-phosphate biosynthesis. Functionally, catalyzes the formation of pyridoxal 5'-phosphate from ribose 5-phosphate (RBP), glyceraldehyde 3-phosphate (G3P) and ammonia. The ammonia is provided by the PdxT subunit. Can also use ribulose 5-phosphate and dihydroxyacetone phosphate as substrates, resulting from enzyme-catalyzed isomerization of RBP and G3P, respectively. The sequence is that of Pyridoxal 5'-phosphate synthase subunit PdxS from Thermoplasma acidophilum (strain ATCC 25905 / DSM 1728 / JCM 9062 / NBRC 15155 / AMRC-C165).